The following is a 336-amino-acid chain: Glycerol-3-phosphate dehydrogenase [NAD(P)+] (336 aa).

Positions 11, 12, 33, 34, and 107 each coordinate NADPH. Positions 107 and 137 each coordinate sn-glycerol 3-phosphate. NADPH is bound at residue Ala-141. 5 residues coordinate sn-glycerol 3-phosphate: Lys-192, Asp-245, Ser-255, Arg-256, and Asn-257. The Proton acceptor role is filled by Lys-192. Arg-256 is an NADPH binding site. Glu-282 contributes to the NADPH binding site.

The protein belongs to the NAD-dependent glycerol-3-phosphate dehydrogenase family.

The protein localises to the cytoplasm. It catalyses the reaction sn-glycerol 3-phosphate + NAD(+) = dihydroxyacetone phosphate + NADH + H(+). The enzyme catalyses sn-glycerol 3-phosphate + NADP(+) = dihydroxyacetone phosphate + NADPH + H(+). Its pathway is membrane lipid metabolism; glycerophospholipid metabolism. Catalyzes the reduction of the glycolytic intermediate dihydroxyacetone phosphate (DHAP) to sn-glycerol 3-phosphate (G3P), the key precursor for phospholipid synthesis. This Thermobifida fusca (strain YX) protein is Glycerol-3-phosphate dehydrogenase [NAD(P)+].